Reading from the N-terminus, the 227-residue chain is ATP-dependent dethiobiotin synthetase BioD (227 aa).

Position 13–18 (13–18 (DIGKTY)) interacts with ATP. Threonine 17 serves as a coordination point for Mg(2+). Lysine 38 is a catalytic residue. Serine 42 contributes to the substrate binding site. ATP contacts are provided by residues aspartate 55, 116–119 (EGSG), and 179–180 (NN). Aspartate 55 and glutamate 116 together coordinate Mg(2+).

The protein belongs to the dethiobiotin synthetase family. As to quaternary structure, homodimer. Mg(2+) is required as a cofactor.

It is found in the cytoplasm. It catalyses the reaction (7R,8S)-7,8-diammoniononanoate + CO2 + ATP = (4R,5S)-dethiobiotin + ADP + phosphate + 3 H(+). It participates in cofactor biosynthesis; biotin biosynthesis; biotin from 7,8-diaminononanoate: step 1/2. In terms of biological role, catalyzes a mechanistically unusual reaction, the ATP-dependent insertion of CO2 between the N7 and N8 nitrogen atoms of 7,8-diaminopelargonic acid (DAPA, also called 7,8-diammoniononanoate) to form a ureido ring. The polypeptide is ATP-dependent dethiobiotin synthetase BioD (Clostridium botulinum (strain Okra / Type B1)).